A 224-amino-acid chain; its full sequence is Holliday junction branch migration complex subunit RuvA (224 aa).

A domain I region spans residues 1–64 (MIGRLSGVLV…EDLLQLYGFP (64 aa)). Positions 65 to 143 (TLLEKEWHRL…EVMAMGGTLE (79 aa)) are domain II. Residues 144–171 (AALDGVIEDGMAASEGIEPPSAARPAVP) are flexible linker. The segment at 172-224 (SAASDQAGALSALVNLGYGQGEAASAVATAAGEGAVGETDIIRAALRLLAPKG) is domain III.

This sequence belongs to the RuvA family. As to quaternary structure, homotetramer. Forms an RuvA(8)-RuvB(12)-Holliday junction (HJ) complex. HJ DNA is sandwiched between 2 RuvA tetramers; dsDNA enters through RuvA and exits via RuvB. An RuvB hexamer assembles on each DNA strand where it exits the tetramer. Each RuvB hexamer is contacted by two RuvA subunits (via domain III) on 2 adjacent RuvB subunits; this complex drives branch migration. In the full resolvosome a probable DNA-RuvA(4)-RuvB(12)-RuvC(2) complex forms which resolves the HJ.

It localises to the cytoplasm. The RuvA-RuvB-RuvC complex processes Holliday junction (HJ) DNA during genetic recombination and DNA repair, while the RuvA-RuvB complex plays an important role in the rescue of blocked DNA replication forks via replication fork reversal (RFR). RuvA specifically binds to HJ cruciform DNA, conferring on it an open structure. The RuvB hexamer acts as an ATP-dependent pump, pulling dsDNA into and through the RuvAB complex. HJ branch migration allows RuvC to scan DNA until it finds its consensus sequence, where it cleaves and resolves the cruciform DNA. The sequence is that of Holliday junction branch migration complex subunit RuvA from Dinoroseobacter shibae (strain DSM 16493 / NCIMB 14021 / DFL 12).